A 374-amino-acid polypeptide reads, in one-letter code: Flagellar P-ring protein (374 aa).

Residues 1–29 (MRRVRTTRLFQVACAAIVALASSAMSAHA) form the signal peptide.

Belongs to the FlgI family. The basal body constitutes a major portion of the flagellar organelle and consists of four rings (L,P,S, and M) mounted on a central rod.

The protein resides in the periplasm. Its subcellular location is the bacterial flagellum basal body. Its function is as follows. Assembles around the rod to form the L-ring and probably protects the motor/basal body from shearing forces during rotation. The sequence is that of Flagellar P-ring protein from Bradyrhizobium sp. (strain BTAi1 / ATCC BAA-1182).